The following is a 917-amino-acid chain: MDYKETLLMPKTDFPMRGGLPNKEPQIQEKWDAEDQYHKALEKNKGNETFILHDGPPYANGNLHMGHALNKILKDFIVRYKTMQGFYAPYVPGWDTHGLPIEQALTKKGVDRKKMSTAEFREKCKEFALEQIELQKKDFRRLGVRGDFNDPYITLKPEYEAAQIRIFGEMADKGLIYKGKKPVYWSPSSESSLAEAEIEYHDKRSASIYVAFDVKDDKGVVDADAKFIIWTTTPWTIPSNVAITVHPELKYGQYNVDGEKYIIAEALSDAVAEALDWDKASIKLEKEYTGKELEYVVAQHPFLDRESLVINGDHVTTDAGTGCVHTAPGHGEDDYIVGQKYELPVISPIDDKGVFTEEGGQFEGMFYDKANKAVTDLLTEKGALLKLDFITHSYPHDWRTKKPVIFRATPQWFASISKVRQDILDAIENTNFKVNWGKTRIYNMVRDRGEWVISRQRVWGVPLPVFYAENGEIIMTKETVNHVADLFAEHGSNIWFEREAKDLLPEGFTHPGSPNGTFTKETDIMDVWFDSGSSHRGVLETRPELSFPADMYLEGSDQYRGWFNSSITTSVATRGVSPYKFLLSHGFVMDGEGKKMSKSLGNVIVPDQVVKQKGADIARLWVSSTDYLADVRISDEILKQTSDVYRKIRNTLRFMLGNINDFNPDTDSITESELLEVDRYLLNRLREFTASTINNYENFDYLNIYQEVQNFINVELSNFYLDYGKDILYIEQRDSHIRRSMQTVLYQILVDMTKLLAPILVHTAEEVWSHTPHVKEESVHLADMPKVVEVDQALLDKWRTFMNLRDDVNRALETARNEKVIGKSLEAKVTIASNDKFNASEFLTSFDALHQLFIVSQVKVVDKLDDQATAYEHGDIVIEHADGEKCERCWNYSEDLGAVDELTHLCPRCQQVVKSLV.

A 'HIGH' region motif is present at residues 57–67 (PYANGNLHMGH). Residue Glu554 participates in L-isoleucyl-5'-AMP binding. Residues 595 to 599 (KMSKS) carry the 'KMSKS' region motif. Position 598 (Lys598) interacts with ATP. Residues Cys886, Cys889, Cys906, and Cys909 each coordinate Zn(2+).

The protein belongs to the class-I aminoacyl-tRNA synthetase family. IleS type 1 subfamily. In terms of assembly, monomer. The cofactor is Zn(2+).

It is found in the cytoplasm. It catalyses the reaction tRNA(Ile) + L-isoleucine + ATP = L-isoleucyl-tRNA(Ile) + AMP + diphosphate. Its function is as follows. Catalyzes the attachment of isoleucine to tRNA(Ile). As IleRS can inadvertently accommodate and process structurally similar amino acids such as valine, to avoid such errors it has two additional distinct tRNA(Ile)-dependent editing activities. One activity is designated as 'pretransfer' editing and involves the hydrolysis of activated Val-AMP. The other activity is designated 'posttransfer' editing and involves deacylation of mischarged Val-tRNA(Ile). This is Isoleucine--tRNA ligase (ileS) from Staphylococcus aureus (strain MSSA476).